The following is a 575-amino-acid chain: V-type ATP synthase alpha chain (575 aa).

238–245 lines the ATP pocket; the sequence is GPFGAGKT.

Belongs to the ATPase alpha/beta chains family.

The catalysed reaction is ATP + H2O + 4 H(+)(in) = ADP + phosphate + 5 H(+)(out). Its function is as follows. Produces ATP from ADP in the presence of a proton gradient across the membrane. The V-type alpha chain is a catalytic subunit. This Borreliella burgdorferi (strain ZS7) (Borrelia burgdorferi) protein is V-type ATP synthase alpha chain.